A 477-amino-acid chain; its full sequence is Ribulose bisphosphate carboxylase large chain (477 aa).

The propeptide occupies 1–2 (MS). Residue Pro-3 is modified to N-acetylproline. At Lys-14 the chain carries N6,N6,N6-trimethyllysine. Residues Asn-123 and Thr-173 each coordinate substrate. The Proton acceptor role is filled by Lys-175. Lys-177 lines the substrate pocket. Mg(2+)-binding residues include Lys-201, Asp-203, and Glu-204. At Lys-201 the chain carries N6-carboxylysine. His-294 serves as the catalytic Proton acceptor. Residues Arg-295, His-327, and Ser-379 each coordinate substrate.

This sequence belongs to the RuBisCO large chain family. Type I subfamily. As to quaternary structure, heterohexadecamer of 8 large chains and 8 small chains; disulfide-linked. The disulfide link is formed within the large subunit homodimers. It depends on Mg(2+) as a cofactor. The disulfide bond which can form in the large chain dimeric partners within the hexadecamer appears to be associated with oxidative stress and protein turnover.

Its subcellular location is the plastid. It is found in the chloroplast. It carries out the reaction 2 (2R)-3-phosphoglycerate + 2 H(+) = D-ribulose 1,5-bisphosphate + CO2 + H2O. It catalyses the reaction D-ribulose 1,5-bisphosphate + O2 = 2-phosphoglycolate + (2R)-3-phosphoglycerate + 2 H(+). Its function is as follows. RuBisCO catalyzes two reactions: the carboxylation of D-ribulose 1,5-bisphosphate, the primary event in carbon dioxide fixation, as well as the oxidative fragmentation of the pentose substrate in the photorespiration process. Both reactions occur simultaneously and in competition at the same active site. The polypeptide is Ribulose bisphosphate carboxylase large chain (Carthamus tinctorius (Safflower)).